We begin with the raw amino-acid sequence, 356 residues long: C-C chemokine receptor 1-like protein 1 (356 aa).

The Extracellular segment spans residues 1–32 (MEIPAVTEPSYNTVAKNDFMSGFLCFSINVRA). Residues 33–60 (FGITVLTPLYSLVFIIGVIGHVLVVLVL) traverse the membrane as a helical segment. The Cytoplasmic portion of the chain corresponds to 61–67 (IQHKRLR). Residues 68 to 92 (NMTSIYLFNLAISDLVFLSTLPFWV) form a helical membrane-spanning segment. At 93–108 (DYIMKGDWIFGNAMCK) the chain is on the extracellular side. An intrachain disulfide couples Cys-107 to Cys-184. A helical membrane pass occupies residues 109–130 (FVSGFYYLGLYSDMFFITLLTI). Topologically, residues 131 to 147 (DRYLAVVHVVFALRART) are cytoplasmic. A helical transmembrane segment spans residues 148-172 (VTFGIISSIITWVLAALVSIPCLYV). Topologically, residues 173–198 (FKSQMEFTYHTCRAILPRKSLIRFLR) are extracellular. The helical transmembrane segment at 199-224 (FQALTMNILGLILPLLAMIICYTRII) threads the bilayer. Over 225–240 (NVLHRRPNKKKAKVMR) the chain is Cytoplasmic. Residues 241-265 (LIFVITLLFFLLLAPYYLAAFVSAF) form a helical membrane-spanning segment. Topologically, residues 266–282 (EDVLFTPSCLRSQQVDL) are extracellular. Residues 283–306 (SLMITEALAYTHCCVNPVIYVFVG) form a helical membrane-spanning segment. Over 307–356 (KRFRKYLWQLFRRHTAITLPQWLPFLSVDRAQRASATPPSTVEIETSADL) the chain is Cytoplasmic.

It belongs to the G-protein coupled receptor 1 family. As to expression, detected in the spleen, liver and leukocytes.

It is found in the cell membrane. In terms of biological role, probable receptor for a C-C type chemokine. In Mus musculus (Mouse), this protein is C-C chemokine receptor 1-like protein 1 (Ccr1l1).